The primary structure comprises 173 residues: MDTIVDFKALPYRKCVGILVFNYEGKVWVGRRLMTVSHANVDMSKLWQLPQGGINQGEKPIDAARRELYEETGIQSVKLIKEAQDWFEYDFPQELMGHVLNNKYRGQTQKWFSFQFTGEISEITINPPPDGNKAEFDQWKWVDLEELPSIVVSFKKHVYTQVVKEFRNSFKYL.

Residues 11-164 (PYRKCVGILV…KKHVYTQVVK (154 aa)) enclose the Nudix hydrolase domain. A Nudix box motif is present at residues 52–73 (GGINQGEKPIDAARRELYEETG).

The protein belongs to the Nudix hydrolase family. RppH subfamily. A divalent metal cation serves as cofactor.

Functionally, accelerates the degradation of transcripts by removing pyrophosphate from the 5'-end of triphosphorylated RNA, leading to a more labile monophosphorylated state that can stimulate subsequent ribonuclease cleavage. The protein is RNA pyrophosphohydrolase of Bartonella clarridgeiae.